The primary structure comprises 249 residues: Probable transcriptional regulatory protein aq_1575 (249 aa).

The protein belongs to the TACO1 family.

The protein resides in the cytoplasm. The polypeptide is Probable transcriptional regulatory protein aq_1575 (Aquifex aeolicus (strain VF5)).